The primary structure comprises 837 residues: MANILKTIIENDKGEIRRLEKMADKVFKYEDQMAALTDDQLKAKTVEFKERYQNGESLDSLLYEAFAVVREGAKRVLGLFPYKVQVMGGIVLHHGDVPEMRTGEGKTLTATMPVYLNALSGKGVHVVTVNEYLSERDATEMGELYSWLGLSVGINLATKSPMEKKEAYECDITYSTNSEIGFDYLRDNMVVRAENMVQRPLNYALVDEVDSILIDEARTPLIVSGANAVETSQLYHMADHYVKSLNKDDYIIDVQSKTIGLSDSGIDRAESYFKLENLYDIENVALTHFIDNALRANYIMLLDIDYVVSEEQEILIVDQFTGRTMEGRRYSDGLHQAIEAKEGVPIQDETKTSASITYQNLFRMYKKLSGMTGTGKTEEEEFREIYNIRVIPIPTNRPVQRIDHSDLLYASIESKFKAVVEDVKARYQKGQPVLVGTVAVETSDYISKKLVAAGVPHEVLNAKNHYREAQIIMNAGQRGAVTIATNMAGRGTDIKLGEGVRELGGLCVIGTERHESRRIDNQLRGRSGRQGDPGESQFYLSLEDDLMKRFGSERLKGIFERLNMSEEAIESRMLTRQVEAAQKRVEGNNHDTRKQVLQYDDVMREQREIIYAQRYDVITADRDLAPEIQAMIKRTIERVVDGHARAKQDEKLEAILNFAKYNLLPEDSITMEDLSGLSDKAIKEELFQRALKVYDSQVSKLRDEEAVKEFQKVLILRVVDNKWTDHIDALDQLRNAVGLRGYAQNNPVVEYQAEGFRMFNDMIGSIEFDVTRLMMKAQIHEQERPQAERHISTTATRNIAAHQASMPEDLDLNQIGRNELCPCGSGKKFKNCHGKRQ.

ATP contacts are provided by residues Gln-85, 103-107 (GEGKT), and Asp-493. 4 residues coordinate Zn(2+): Cys-821, Cys-823, Cys-832, and His-833.

The protein belongs to the SecA family. As to quaternary structure, monomer and homodimer. Part of the essential Sec protein translocation apparatus which comprises SecA, SecYEG and auxiliary proteins SecDF. Other proteins may also be involved. Zn(2+) is required as a cofactor.

The protein localises to the cell membrane. It is found in the cytoplasm. It carries out the reaction ATP + H2O + cellular proteinSide 1 = ADP + phosphate + cellular proteinSide 2.. Part of the Sec protein translocase complex. Interacts with the SecYEG preprotein conducting channel. Has a central role in coupling the hydrolysis of ATP to the transfer of proteins into and across the cell membrane, serving as an ATP-driven molecular motor driving the stepwise translocation of polypeptide chains across the membrane. The sequence is that of Protein translocase subunit SecA from Streptococcus pneumoniae (strain ATCC BAA-255 / R6).